Consider the following 417-residue polypeptide: MFSKQDQIQGYDDALLAAMNAEEQRQEDHIELIASENYTSKRVMQAQGSGLTNKYAEGYPGKRYYGGCEHVDKVEALAIERAKQLFGADYANVQPHSGSSANGAVYLALLQAGDTILGMSLAHGGHLTHGAKVSSSGKLYNAVQYGIDTNTGLIDYDEVERLAVEHKPKMIVAGFSAYSKTLDFPRFRAIADKVGALLFVDMAHVAGLVAAGLYPNPIPFADVVTTTTHKTLRGPRGGLILAKSNEEIEKKLNAAVFPGAQGGPLMHVIAAKAVCFKEALEPGFKAYQQQVIENAQAMAQVFIDRGYDVVSGGTDNHLFLVSLIRQGLTGKDADAALGRAHITVNKNAVPNDPQSPFVTSGLRIGTPAVTTRGFKVAQCVALAGWICDILDNLGDADVEADVAKNVAALCADFPVYR.

(6S)-5,6,7,8-tetrahydrofolate contacts are provided by residues leucine 121 and 125-127 (GHL). Position 230 is an N6-(pyridoxal phosphate)lysine (lysine 230). 355-357 (SPF) contributes to the (6S)-5,6,7,8-tetrahydrofolate binding site.

The protein belongs to the SHMT family. As to quaternary structure, homodimer. Pyridoxal 5'-phosphate is required as a cofactor.

It is found in the cytoplasm. The enzyme catalyses (6R)-5,10-methylene-5,6,7,8-tetrahydrofolate + glycine + H2O = (6S)-5,6,7,8-tetrahydrofolate + L-serine. Its pathway is one-carbon metabolism; tetrahydrofolate interconversion. The protein operates within amino-acid biosynthesis; glycine biosynthesis; glycine from L-serine: step 1/1. Functionally, catalyzes the reversible interconversion of serine and glycine with tetrahydrofolate (THF) serving as the one-carbon carrier. This reaction serves as the major source of one-carbon groups required for the biosynthesis of purines, thymidylate, methionine, and other important biomolecules. Also exhibits THF-independent aldolase activity toward beta-hydroxyamino acids, producing glycine and aldehydes, via a retro-aldol mechanism. The polypeptide is Serine hydroxymethyltransferase 1 (Pseudomonas putida (strain ATCC 47054 / DSM 6125 / CFBP 8728 / NCIMB 11950 / KT2440)).